A 457-amino-acid chain; its full sequence is tRNA modification GTPase MnmE (457 aa).

3 residues coordinate (6S)-5-formyl-5,6,7,8-tetrahydrofolate: arginine 22, glutamate 83, and arginine 122. Positions 219–378 constitute a TrmE-type G domain; it reads GLATAIIGRP…LEEAIKTLFF (160 aa). Asparagine 229 serves as a coordination point for K(+). Residues 229-234, 248-254, and 273-276 each bind GTP; these read NVGKSS, TDIAGTT, and DTAG. Mg(2+) is bound at residue serine 233. Positions 248, 250, and 253 each coordinate K(+). Residue threonine 254 coordinates Mg(2+). A (6S)-5-formyl-5,6,7,8-tetrahydrofolate-binding site is contributed by lysine 457.

Belongs to the TRAFAC class TrmE-Era-EngA-EngB-Septin-like GTPase superfamily. TrmE GTPase family. In terms of assembly, homodimer. Heterotetramer of two MnmE and two MnmG subunits. K(+) serves as cofactor.

Its subcellular location is the cytoplasm. Exhibits a very high intrinsic GTPase hydrolysis rate. Involved in the addition of a carboxymethylaminomethyl (cmnm) group at the wobble position (U34) of certain tRNAs, forming tRNA-cmnm(5)s(2)U34. The polypeptide is tRNA modification GTPase MnmE (Listeria welshimeri serovar 6b (strain ATCC 35897 / DSM 20650 / CCUG 15529 / CIP 8149 / NCTC 11857 / SLCC 5334 / V8)).